We begin with the raw amino-acid sequence, 699 residues long: MSKINKLEHIRNIGICAHIDAGKTTTTERILYYTGKSHKIGEVHEGGATMDWMEQEQERGITITSAATTCRWQDKIINIIDTPGHVDFTIEVERSLRVLDGAVAVFDGVAGVEPQSETVWRQADKYNVPRMCFVNKMDRMGADFYRCVEMIKDRLGAKPLVIQLPVGIEENFKGIIDLVKMKAVIWKDESLGAKYFEEHIPADMKDKAEEYRAKLLDMVVELDDHVMEKYLSGEEVTEEEIKILIRNGTISAAFYPVLCGSAFKNKGVQPLLDAVVDFLPSPIDIGIVKGMEVNTGEEKDFPISITEPFSALAFKIMNDPFVGSLTFIRIYSGKITSGASVINTVKNKREKIGRMLLMHANNREDIKEASAGDIVALAGLKDTSTGDTLSDIDTQVVLERMEFPEPVIELAVEPKSTADQEKMGLALSRLAAEDPSFRVSTDHETGQTVIKGMGELHLEIIIDRMRREFKVEANIGVPQVAYRETITKACEIDYTHKKQSGGAGQFARVKIIFEPLKEVKDLKDEDKNKTFVFESKIVGGAVPKEYIPGVEKGLNNIRETGVIAGYPMIDFKATLVDGAFHDVDSSVLAFEIAAKAAFREGMPKGNPKLLEPIMKVEVITPDEYMGDIIGDLNSRRGQIQSMDPRGNAQVVTANVPLAEMFGYVNMLRSLSQGRAQFSMIFSHYDQVPSQVADIIKAKK.

The tr-type G domain maps to 8 to 283; sequence EHIRNIGICA…AVVDFLPSPI (276 aa). Residues 17-24, 81-85, and 135-138 each bind GTP; these read AHIDAGKT, DTPGH, and NKMD.

This sequence belongs to the TRAFAC class translation factor GTPase superfamily. Classic translation factor GTPase family. EF-G/EF-2 subfamily.

Its subcellular location is the cytoplasm. In terms of biological role, catalyzes the GTP-dependent ribosomal translocation step during translation elongation. During this step, the ribosome changes from the pre-translocational (PRE) to the post-translocational (POST) state as the newly formed A-site-bound peptidyl-tRNA and P-site-bound deacylated tRNA move to the P and E sites, respectively. Catalyzes the coordinated movement of the two tRNA molecules, the mRNA and conformational changes in the ribosome. This chain is Elongation factor G, found in Rickettsia helvetica.